The following is a 377-amino-acid chain: Succinyl-diaminopimelate desuccinylase (377 aa).

His71 is a Zn(2+) binding site. Asp73 is a catalytic residue. Asp102 is a Zn(2+) binding site. Glu132 serves as the catalytic Proton acceptor. The Zn(2+) site is built by Glu133, Glu161, and His346.

It belongs to the peptidase M20A family. DapE subfamily. Homodimer. Zn(2+) serves as cofactor. The cofactor is Co(2+).

It catalyses the reaction N-succinyl-(2S,6S)-2,6-diaminopimelate + H2O = (2S,6S)-2,6-diaminopimelate + succinate. It participates in amino-acid biosynthesis; L-lysine biosynthesis via DAP pathway; LL-2,6-diaminopimelate from (S)-tetrahydrodipicolinate (succinylase route): step 3/3. Its function is as follows. Catalyzes the hydrolysis of N-succinyl-L,L-diaminopimelic acid (SDAP), forming succinate and LL-2,6-diaminopimelate (DAP), an intermediate involved in the bacterial biosynthesis of lysine and meso-diaminopimelic acid, an essential component of bacterial cell walls. The chain is Succinyl-diaminopimelate desuccinylase from Rhizorhabdus wittichii (strain DSM 6014 / CCUG 31198 / JCM 15750 / NBRC 105917 / EY 4224 / RW1) (Sphingomonas wittichii).